The primary structure comprises 99 residues: Putative transmembrane protein ORF13 (99 aa).

Helical transmembrane passes span 8–28 (IATF…MAGI), 42–62 (LGLF…YIIV), and 73–93 (GPIT…AIIA).

It localises to the host membrane. In His1 virus (isolate Australia/Victoria) (His1V), this protein is Putative transmembrane protein ORF13.